The primary structure comprises 1651 residues: Alsin (1651 aa).

RCC1 repeat units lie at residues 59–108 (DGEV…AVTE), 109–167 (SGVV…ALSI), and 169–218 (REIW…ALVQ). Residues 444–476 (REEQVKQESLQGKKSSSLMDIREEESEGGSRRL) are disordered. The segment covering 450 to 461 (QESLQGKKSSSL) has biased composition (polar residues). Phosphoserine is present on residues serine 459, serine 460, serine 477, and serine 486. A Phosphothreonine modification is found at threonine 504. RCC1 repeat units follow at residues 519-570 (RTEV…ALTA) and 572-621 (SQVY…FLVD). The residue at position 527 (lysine 527) is an N6-acetyllysine. One can recognise a DH domain in the interval 684-879 (GYIASLHELA…ESLALHLGKK (196 aa)). The region spanning 895–1001 (GKMTDSLRKP…RAISQAVDQA (107 aa)) is the PH domain. MORN repeat units lie at residues 1043–1065 (YDGR…DGKV), 1066–1088 (YSGT…NKAL), 1094–1116 (YVGH…SGEV), 1117–1139 (FEGC…KLTS), 1145–1167 (FIGQ…TRGE), 1169–1191 (YMGM…FGLY), 1192–1214 (YEGN…DDTI), and 1215–1238 (YEGE…NGDY). The residue at position 1329 (serine 1329) is a Phosphoserine. The VPS9 domain occupies 1507 to 1651 (KQPDIALLGF…YYQIQREKLN (145 aa)).

As to quaternary structure, forms a heteromeric complex with ALS2CL. Interacts with ALS2CL.

Its function is as follows. May act as a GTPase regulator. Controls survival and growth of spinal motoneurons. This Rattus norvegicus (Rat) protein is Alsin (Als2).